The primary structure comprises 415 residues: Elongation factor 1-gamma 1 (415 aa).

N-acetylserine is present on Ser-2. The region spanning 2-78 (SQGTLYANFR…YLVKLSQDDK (77 aa)) is the GST N-terminal domain. The residue at position 32 (Thr-32) is a Phosphothreonine. The GST C-terminal domain maps to 89–215 (DLNAQAQIIR…KDFKFADKPL (127 aa)). The interval 212–256 (DKPLSPPQKKKEKKAPAAAPAASKKKEEAKPAATETETSSKKPKH) is disordered. Positions 254-415 (PKHPLELLGK…KEIVDGKVLK (162 aa)) constitute an EF-1-gamma C-terminal domain.

In terms of assembly, the eukaryotic elongation factor 1 complex (eEF1) is probably a heterohexamer. Two trimeric complexes, each composed of eEF1A (TEF1 or TEF2), eEF1Balpha (EFB1) and eEF1Bgamma (CAM1 or TEF4), are probably dimerized via the eF1Bgamma subunits. The eEF1B subcomplex with the GEF activity is formed of eEF1Balpha and eEF1Bgamma. CAM1 interacts with EFB1. Component of a complex bound to MXR1 promoter region.

Its subcellular location is the cytoplasm. The protein localises to the nucleus. It functions in the pathway protein biosynthesis; polypeptide chain elongation. Subunit of the eukaryotic elongation factor 1 complex (eEF1). Probably plays a role in anchoring the complex to other cellular components. May be involved in transcriptional regulation of MXR1. The polypeptide is Elongation factor 1-gamma 1 (CAM1) (Saccharomyces cerevisiae (strain ATCC 204508 / S288c) (Baker's yeast)).